We begin with the raw amino-acid sequence, 355 residues long: Phosphoribosylformylglycinamidine cyclo-ligase (355 aa).

It belongs to the AIR synthase family.

The protein resides in the cytoplasm. The catalysed reaction is 2-formamido-N(1)-(5-O-phospho-beta-D-ribosyl)acetamidine + ATP = 5-amino-1-(5-phospho-beta-D-ribosyl)imidazole + ADP + phosphate + H(+). It functions in the pathway purine metabolism; IMP biosynthesis via de novo pathway; 5-amino-1-(5-phospho-D-ribosyl)imidazole from N(2)-formyl-N(1)-(5-phospho-D-ribosyl)glycinamide: step 2/2. This Methylobacterium nodulans (strain LMG 21967 / CNCM I-2342 / ORS 2060) protein is Phosphoribosylformylglycinamidine cyclo-ligase.